A 217-amino-acid polypeptide reads, in one-letter code: Urease accessory protein UreG (217 aa).

Residues 1–18 (MNAPHHPAHSTVRTKKLP) are compositionally biased toward basic residues. The tract at residues 1–24 (MNAPHHPAHSTVRTKKLPPLRVGV) is disordered. 26-33 (GPVGSGKT) lines the GTP pocket.

Belongs to the SIMIBI class G3E GTPase family. UreG subfamily. Homodimer. UreD, UreF and UreG form a complex that acts as a GTP-hydrolysis-dependent molecular chaperone, activating the urease apoprotein by helping to assemble the nickel containing metallocenter of UreC. The UreE protein probably delivers the nickel.

It is found in the cytoplasm. Facilitates the functional incorporation of the urease nickel metallocenter. This process requires GTP hydrolysis, probably effectuated by UreG. The polypeptide is Urease accessory protein UreG (Paraburkholderia xenovorans (strain LB400)).